The chain runs to 209 residues: COP9 signalosome complex subunit 8 (209 aa).

A PCI domain is found at 8-179 (DNAFSFRKLL…GTLDVSLNRF (172 aa)). The residue at position 175 (serine 175) is a Phosphoserine.

The protein belongs to the CSN8 family. As to quaternary structure, component of the CSN complex, composed of COPS1/GPS1, COPS2, COPS3, COPS4, COPS5, COPS6, COPS7 (COPS7A or COPS7B), COPS8 and COPS9. In the complex, it probably interacts directly with COPS3, COPS4 and COPS7 (COPS7A or COPS7B). As to expression, widely expressed.

The protein resides in the cytoplasm. It is found in the nucleus. Functionally, component of the COP9 signalosome complex (CSN), a complex involved in various cellular and developmental processes. The CSN complex is an essential regulator of the ubiquitin (Ubl) conjugation pathway by mediating the deneddylation of the cullin subunits of SCF-type E3 ligase complexes, leading to decrease the Ubl ligase activity of SCF-type complexes such as SCF, CSA or DDB2. The complex is also involved in phosphorylation of p53/TP53, c-jun/JUN, IkappaBalpha/NFKBIA, ITPK1 and IRF8/ICSBP, possibly via its association with CK2 and PKD kinases. CSN-dependent phosphorylation of TP53 and JUN promotes and protects degradation by the Ubl system, respectively. The chain is COP9 signalosome complex subunit 8 (Cops8) from Mus musculus (Mouse).